The chain runs to 278 residues: Glutamate racemase (278 aa).

Substrate is bound by residues 13-14 (DS) and 45-46 (YG). Catalysis depends on cysteine 76, which acts as the Proton donor/acceptor. 77–78 (NT) is a binding site for substrate. The active-site Proton donor/acceptor is cysteine 185. 186 to 187 (TH) provides a ligand contact to substrate.

This sequence belongs to the aspartate/glutamate racemases family.

The catalysed reaction is L-glutamate = D-glutamate. It functions in the pathway cell wall biogenesis; peptidoglycan biosynthesis. In terms of biological role, provides the (R)-glutamate required for cell wall biosynthesis. The sequence is that of Glutamate racemase from Gloeothece citriformis (strain PCC 7424) (Cyanothece sp. (strain PCC 7424)).